Here is a 955-residue protein sequence, read N- to C-terminus: Leucine--tRNA ligase (955 aa).

The 'HIGH' region motif lies at 51–61; it reads PYLNGVLHAGH. The 'KMSKS' region motif lies at 647–651; the sequence is KLSKS. Residue Lys-650 participates in ATP binding.

This sequence belongs to the class-I aminoacyl-tRNA synthetase family.

It localises to the cytoplasm. It carries out the reaction tRNA(Leu) + L-leucine + ATP = L-leucyl-tRNA(Leu) + AMP + diphosphate. The polypeptide is Leucine--tRNA ligase (Methanococcus maripaludis (strain DSM 14266 / JCM 13030 / NBRC 101832 / S2 / LL)).